We begin with the raw amino-acid sequence, 72 residues long: uncharacterized protein (72 aa).

This is an uncharacterized protein from Archaeoglobus fulgidus (strain ATCC 49558 / DSM 4304 / JCM 9628 / NBRC 100126 / VC-16).